Consider the following 935-residue polypeptide: Protocadherin gamma-A11 (935 aa).

An N-terminal signal peptide occupies residues 1–29 (MANRLQRGDRSRLLLLLCIFLGTLRGFRA). 6 consecutive Cadherin domains span residues 30 to 134 (RQIR…APSF), 135 to 243 (QEDE…IPMF), 244 to 348 (TQSV…APEI), 349 to 453 (TITS…PPVF), 454 to 563 (PHSS…APEI), and 571 to 677 (DGST…ADLG). Residues 30 to 693 (RQIRYSVPEE…NSETSDLSLY (664 aa)) are Extracellular-facing. A glycan (N-linked (GlcNAc...) asparagine) is linked at Asn-48. N-linked (GlcNAc...) asparagine glycans are attached at residues Asn-255, Asn-266, Asn-420, and Asn-546. The chain crosses the membrane as a helical span at residues 694–714 (LVVAVAAVSCIFLVFVIVLLA). The Cytoplasmic portion of the chain corresponds to 715–935 (LRLWRWHKSR…KKKSGKKEKK (221 aa)). Disordered regions lie at residues 805 to 844 (CDPTSNQQAPPNTDWRFSQAQRPGTSGSQNGDDTGTWPNN) and 905 to 935 (ATLTNAAGKRDGKAPAGGNGNKKKSGKKEKK). Residues 807–844 (PTSNQQAPPNTDWRFSQAQRPGTSGSQNGDDTGTWPNN) are compositionally biased toward polar residues. Basic residues predominate over residues 925 to 935 (NKKKSGKKEKK).

It localises to the cell membrane. Potential calcium-dependent cell-adhesion protein. May be involved in the establishment and maintenance of specific neuronal connections in the brain. The polypeptide is Protocadherin gamma-A11 (PCDHGA11) (Homo sapiens (Human)).